The primary structure comprises 218 residues: Large ribosomal subunit protein uL3 (218 aa).

Residues 127–167 (GFSRGPMSHGSKNHRLPGSIGAGTTPGRVYPGKRMAGRMGG) form a disordered region.

The protein belongs to the universal ribosomal protein uL3 family. In terms of assembly, part of the 50S ribosomal subunit. Forms a cluster with proteins L14 and L19.

One of the primary rRNA binding proteins, it binds directly near the 3'-end of the 23S rRNA, where it nucleates assembly of the 50S subunit. This chain is Large ribosomal subunit protein uL3, found in Prochlorococcus marinus (strain NATL1A).